A 440-amino-acid polypeptide reads, in one-letter code: Chromosome partition protein MukF (440 aa).

The tract at residues 208 to 236 is leucine-zipper; that stretch reads LDETSGNLRELQDTLNAAGDKLQSQLLRI.

The protein belongs to the MukF family. As to quaternary structure, interacts, and probably forms a ternary complex, with MukE and MukB via its C-terminal region. The complex formation is stimulated by calcium or magnesium. It is required for an interaction between MukE and MukB.

The protein localises to the cytoplasm. It is found in the nucleoid. Involved in chromosome condensation, segregation and cell cycle progression. May participate in facilitating chromosome segregation by condensation DNA from both sides of a centrally located replisome during cell division. Not required for mini-F plasmid partitioning. Probably acts via its interaction with MukB and MukE. Overexpression results in anucleate cells. It has a calcium binding activity. This chain is Chromosome partition protein MukF, found in Histophilus somni (strain 129Pt) (Haemophilus somnus).